The sequence spans 349 residues: Sphingomyelinase D (349 aa).

The N-terminal stretch at 1–18 (MLLSSLISLALLSSQVVA) is a signal peptide. His-52 is a catalytic residue. Glu-72, Asp-74, and Asp-123 together coordinate Mg(2+). Residues 310-317 (ATNDNNPW) carry the SMD-tail motif.

The protein belongs to the sphingomyelinase D/phospholipase D family. Mg(2+) serves as cofactor.

It is found in the secreted. It catalyses the reaction a sphingomyelin + H2O = an N-acylsphing-4-enine 1-phosphate + choline + H(+). Its function is as follows. Catalyzes the hydrolysis of sphingomyelin. Sphingomyelinases D are produced by some spider in their venoms, but also by arthropods such as ticks, or pathogenic bacteria and fungi. They might play a role in pathogenicity through different mechanisms, such as membrane destabilization and host cell penetration, but also pulmonary inflammation and cutaneous lesions. The protein is Sphingomyelinase D of Uncinocarpus reesii (strain UAMH 1704).